A 109-amino-acid polypeptide reads, in one-letter code: Small ribosomal subunit protein bS6 (109 aa).

The protein belongs to the bacterial ribosomal protein bS6 family.

Functionally, binds together with bS18 to 16S ribosomal RNA. In Ehrlichia ruminantium (strain Gardel), this protein is Small ribosomal subunit protein bS6.